Consider the following 482-residue polypeptide: MSPTTAANQAKKLIKVPEMRRIKHIHFVGIGGAGMCGIAEVLANQGYKISGSDINASKTTQQLEENGIKVYIGHEAENIKNANVLVVSTAIDPENPEVKAAIEQRIPIVRRAEMLGELMRYRHGIAVAGTHGKTTTTSLLTTMLAEENLDPTYVIGGLLNSTGVNAALGESRFIVAEADESDASFLYLQPMAAIVTNIDADHMDTYEGSFDKLKDTFVQFLHNLPFYGLAVVCGDDANIREILPRVGRPVITYGFNEDNDIRAIDVERDGMRSHFTVLRKGREPLRLTINQPGLHNVLNALAAIGVATDEGVSDEAISRALKGFSGVGRRFQVQGEFELGEGNVKLVDDYGHHPKEVEATIKAARQSHPDRRLVMLFQPHRYSRTRDCFDDFIEVLSQVDQLLLLEVYPAGEKPIVGADSRTLARSIRLRGQVEPILIDPVEGNLQNIMQNVLQPNDLLLTQGAGNVGAISVELAQHHLYVK.

Position 129–135 (129–135) interacts with ATP; that stretch reads GTHGKTT.

This sequence belongs to the MurCDEF family.

It is found in the cytoplasm. It catalyses the reaction UDP-N-acetyl-alpha-D-muramate + L-alanine + ATP = UDP-N-acetyl-alpha-D-muramoyl-L-alanine + ADP + phosphate + H(+). It functions in the pathway cell wall biogenesis; peptidoglycan biosynthesis. Cell wall formation. In Acinetobacter baumannii (strain SDF), this protein is UDP-N-acetylmuramate--L-alanine ligase.